The sequence spans 347 residues: MREETVSWKYFKRDVVPFTAMIAIECTTVGSSILYKAATLRGFSFYVFVFYAYVGATLVLLLLSLIFGRSRSLPTAKSSLFFKIFLLALLGLTSRVAGCKGIEYSSPTLSSAISNLTPAFTFILAIFFRMEQVMLRSSATQAKIIGTIVSISGALVIVLYKGPKLLVAASFTSFESSWIIGGLLLGLQFLLLSVWFILQTHIMEIYPEEIAVVFCYNLCATLISGTVCLLVEKDLNSWQLKPGFSLASVIYSGLFDTSLGSVIHTWGLHVKGPVYISLFKPLSIAIAVAMAAIFLGDTLHLGSVIGSVILSFGFYTVIWGKAREDSTKTVSDSEQSLLLPSHDREED.

10 helical membrane passes run 15–35 (VVPF…SILY), 47–67 (VFVF…SLIF), 73–93 (LPTA…LGLT), 108–128 (TLSS…AIFF), 139–159 (ATQA…VIVL), 178–198 (WIIG…WFIL), 210–230 (IAVV…VCLL), 243–263 (GFSL…GSVI), 276–296 (ISLF…IFLG), and 299–319 (LHLG…TVIW). In terms of domain architecture, EamA 1 spans 30 to 158 (GSSILYKAAT…VSISGALVIV (129 aa)). Residues 216 to 317 (YNLCATLISG…VILSFGFYTV (102 aa)) form the EamA 2 domain.

This sequence belongs to the drug/metabolite transporter (DMT) superfamily. Plant drug/metabolite exporter (P-DME) (TC 2.A.7.4) family.

Its subcellular location is the membrane. In Arabidopsis thaliana (Mouse-ear cress), this protein is WAT1-related protein At4g15540.